Consider the following 111-residue polypeptide: MSDTLSRLAEVLEARKGAAPDSSYVASLYHKGLNKILEKVGEESVETILAAKDAAASGDCKDLIYETADLWFHSLVMLAALGQHPQAVLDELDRRFGLSGHAEKAARPQSE.

Belongs to the PRA-PH family.

It localises to the cytoplasm. It catalyses the reaction 1-(5-phospho-beta-D-ribosyl)-ATP + H2O = 1-(5-phospho-beta-D-ribosyl)-5'-AMP + diphosphate + H(+). It participates in amino-acid biosynthesis; L-histidine biosynthesis; L-histidine from 5-phospho-alpha-D-ribose 1-diphosphate: step 2/9. The protein is Phosphoribosyl-ATP pyrophosphatase of Ectopseudomonas mendocina (strain ymp) (Pseudomonas mendocina).